We begin with the raw amino-acid sequence, 328 residues long: Malate dehydrogenase (328 aa).

11–17 is a binding site for NAD(+); sequence GAAGQIG. Substrate-binding residues include R94 and R100. NAD(+)-binding positions include N107, Q114, and 131–133; that span reads VGN. The substrate site is built by N133 and R164. H189 (proton acceptor) is an active-site residue.

It belongs to the LDH/MDH superfamily. MDH type 2 family.

The catalysed reaction is (S)-malate + NAD(+) = oxaloacetate + NADH + H(+). In terms of biological role, catalyzes the reversible oxidation of malate to oxaloacetate. In Stenotrophomonas maltophilia (strain K279a), this protein is Malate dehydrogenase.